The chain runs to 185 residues: Phosphatidylglycerophosphatase GEP4, mitochondrial (185 aa).

The Phosphoryl acceptor motif lies at 45–49; it reads DKDNC.

Belongs to the GEP4 family.

The protein resides in the mitochondrion inner membrane. It carries out the reaction a 1,2-diacyl-sn-glycero-3-phospho-(1'-sn-glycero-3'-phosphate) + H2O = a 1,2-diacyl-sn-glycero-3-phospho-(1'-sn-glycerol) + phosphate. Its pathway is phospholipid metabolism; phosphatidylglycerol biosynthesis; phosphatidylglycerol from CDP-diacylglycerol: step 2/2. Phosphatidylglycerophosphatase involved in the biosynthesis of cardiolipin (CL), a unique dimeric phosphoglycerolipid predominantly present in mitochondrial membranes and which has important functions for cellular energy metabolism, mitochondrial dynamics and the initiation of apoptotic pathways. Required for the stability of respiratory chain supercomplexes and for growth at elevated temperature, in presence of ethidium bromide or in absence of prohibitins. The polypeptide is Phosphatidylglycerophosphatase GEP4, mitochondrial (GEP4) (Saccharomyces cerevisiae (strain ATCC 204508 / S288c) (Baker's yeast)).